The chain runs to 259 residues: Indole-3-glycerol phosphate synthase (259 aa).

This sequence belongs to the TrpC family.

It carries out the reaction 1-(2-carboxyphenylamino)-1-deoxy-D-ribulose 5-phosphate + H(+) = (1S,2R)-1-C-(indol-3-yl)glycerol 3-phosphate + CO2 + H2O. It functions in the pathway amino-acid biosynthesis; L-tryptophan biosynthesis; L-tryptophan from chorismate: step 4/5. The polypeptide is Indole-3-glycerol phosphate synthase (Dehalococcoides mccartyi (strain ATCC BAA-2100 / JCM 16839 / KCTC 5957 / BAV1)).